The chain runs to 284 residues: 2-dehydro-3-deoxyphosphooctonate aldolase (284 aa).

It belongs to the KdsA family.

It is found in the cytoplasm. It catalyses the reaction D-arabinose 5-phosphate + phosphoenolpyruvate + H2O = 3-deoxy-alpha-D-manno-2-octulosonate-8-phosphate + phosphate. It functions in the pathway carbohydrate biosynthesis; 3-deoxy-D-manno-octulosonate biosynthesis; 3-deoxy-D-manno-octulosonate from D-ribulose 5-phosphate: step 2/3. It participates in bacterial outer membrane biogenesis; lipopolysaccharide biosynthesis. In Ralstonia pickettii (strain 12J), this protein is 2-dehydro-3-deoxyphosphooctonate aldolase.